The chain runs to 804 residues: General transcription and DNA repair factor IIH helicase/translocase subunit XPB (804 aa).

2 disordered regions span residues 1-61 (MSLK…NSNE) and 220-255 (QSSKQKSSKPSNEDNVEDKKDITNDSSKETAEKSSS). A compositionally biased stretch (acidic residues) spans 14–36 (PDEDLEEYSDYSDVDNYGEEDDD). Composition is skewed to low complexity over residues 47-60 (NNNKTKAQTTTNSN) and 220-229 (QSSKQKSSKP). Positions 236–255 (EDKKDITNDSSKETAEKSSS) are enriched in basic and acidic residues. The Helicase ATP-binding domain maps to 335–497 (MFGNGRARSG…DLNFLIGPKM (163 aa)). 348-355 (LPCGAGKT) provides a ligand contact to ATP. The DEVH box motif lies at 450 to 453 (DEVH). Positions 551–705 (QACQFLIDYH…KVITNLKGME (155 aa)) constitute a Helicase C-terminal domain. Disordered stretches follow at residues 736–761 (DDGEDTSFGSRSLSRAPAKAKRSSGS) and 782–804 (KQLKKDSKEHHALFRKHLYTKRR). A compositionally biased stretch (basic and acidic residues) spans 784–793 (LKKDSKEHHA). Residues 794–804 (LFRKHLYTKRR) show a composition bias toward basic residues.

Belongs to the helicase family. RAD25/XPB subfamily. In terms of assembly, component of the 7-subunit TFIIH core complex composed of XPB/ptr8, XPD/rad15, ssl1, tfb1, tfb2, tfb4 and tfb5, which is active in NER. The core complex associates with the 3-subunit CTD-kinase module TFIIK composed of mcs2/cyclin H, mcs6/cdk7 and pmh1/tfb3 to form the 10-subunit holoenzyme (holo-TFIIH) active in transcription.

Its subcellular location is the nucleus. It carries out the reaction Couples ATP hydrolysis with the unwinding of duplex DNA by translocating in the 3'-5' direction.. The catalysed reaction is ATP + H2O = ADP + phosphate + H(+). Functionally, probable ATP-dependent 3'-5' DNA helicase/translocase. Binds dsDNA rather than ssDNA, unzipping it in a translocase rather than classical helicase activity. Component of the general transcription and DNA repair factor IIH (TFIIH) core complex. When complexed to CDK-activating kinase (CAK), involved in RNA transcription by RNA polymerase II. Also involved in transcription-coupled nucleotide excision repair (NER) of damaged DNA. In NER, TFIIH acts by opening DNA around the lesion to allow the excision of the damaged oligonucleotide and its replacement by a new DNA fragment. The ATPase activity of XPB/ptr8, but not its helicase activity, is required for DNA opening. In transcription, TFIIH has an essential role in transcription initiation. When the pre-initiation complex (PIC) has been established, TFIIH is required for promoter opening and promoter escape. The ATP-dependent helicase activity of XPB/ptr8 is required for promoter escape but not for promoter opening. Plays a role in mRNA export. In Schizosaccharomyces pombe (strain 972 / ATCC 24843) (Fission yeast), this protein is General transcription and DNA repair factor IIH helicase/translocase subunit XPB.